The primary structure comprises 330 residues: Probable inactive heme oxygenase 2, chloroplastic (330 aa).

Low complexity-rich tracts occupy residues 1-13 (MPLA…SAVV) and 56-69 (AAEA…VDEA). Disordered stretches follow at residues 1 to 27 (MPLA…RARP), 50 to 82 (PSPP…YPRQ), and 107 to 156 (TTLK…LEGE). The N-terminal 47 residues, 1 to 47 (MPLAAAVAASAVVPPRPPPPPPRRARPLRSFTGLILTRDLAALTVAR), are a transit peptide targeting the chloroplast. Acidic residues predominate over residues 114-151 (TGAEEEVGDGVSEDASASEEEEEEEDDDDVVEEEEEGA).

Belongs to the heme oxygenase family.

The protein localises to the plastid. It localises to the chloroplast. In terms of biological role, probable inactive heme oxygenase that may play a role in the regulation of phytochrome assembly and photomorphogenesis. In Oryza sativa subsp. japonica (Rice), this protein is Probable inactive heme oxygenase 2, chloroplastic (HO2).